The following is a 430-amino-acid chain: Adenylosuccinate synthetase (430 aa).

GTP contacts are provided by residues 12 to 18 and 40 to 42; these read GDEGKGK and GHT. Catalysis depends on D13, which acts as the Proton acceptor. 2 residues coordinate Mg(2+): D13 and G40. IMP-binding positions include 13-16, 38-41, T128, R142, Q223, T238, and R302; these read DEGK and NAGH. H41 acts as the Proton donor in catalysis. 298-304 is a substrate binding site; the sequence is TTTGRPR. GTP-binding positions include R304, 330–332, and 412–414; these read LLD and SVG.

The protein belongs to the adenylosuccinate synthetase family. In terms of assembly, homodimer. The cofactor is Mg(2+).

The protein resides in the cytoplasm. The catalysed reaction is IMP + L-aspartate + GTP = N(6)-(1,2-dicarboxyethyl)-AMP + GDP + phosphate + 2 H(+). It participates in purine metabolism; AMP biosynthesis via de novo pathway; AMP from IMP: step 1/2. Its function is as follows. Plays an important role in the de novo pathway of purine nucleotide biosynthesis. Catalyzes the first committed step in the biosynthesis of AMP from IMP. This chain is Adenylosuccinate synthetase, found in Listeria monocytogenes serovar 1/2a (strain ATCC BAA-679 / EGD-e).